Consider the following 266-residue polypeptide: Dickkopf-related protein 1 (266 aa).

The N-terminal stretch at 1–31 (MMALGAAGATRVFVAMVAAALGGHPLLGVSA) is a signal peptide. The O-linked (GalNAc...) serine glycan is linked to serine 61. Cystine bridges form between cysteine 85–cysteine 97, cysteine 91–cysteine 111, cysteine 114–cysteine 128, cysteine 121–cysteine 133, cysteine 127–cysteine 138, cysteine 189–cysteine 201, cysteine 195–cysteine 210, cysteine 200–cysteine 237, cysteine 220–cysteine 245, and cysteine 239–cysteine 263. The interval 85–138 (CAEDEECGTDEYCASPTRGGDAGVQICLACRKRRKRCMRHAMCCPGNYCKNGIC) is DKK-type Cys-1. Positions 189-263 (CLRSSDCASG…ASNSSRLHTC (75 aa)) are DKK-type Cys-2. N-linked (GlcNAc...) asparagine glycosylation is present at asparagine 256.

Belongs to the dickkopf family. In terms of assembly, interacts with LRP6. Interacts (via the C-terminal Cys-rich domain) with LRP5 (via beta-propeller regions 3 and 4); the interaction, enhanced by MESD and or KREMEN, antagonizes Wnt-mediated signaling. Forms a ternary complex with LRP6 and KREM1. Interacts with KREM1. As to expression, placenta.

It localises to the secreted. In terms of biological role, antagonizes canonical Wnt signaling by inhibiting LRP5/6 interaction with Wnt and by forming a ternary complex with the transmembrane protein KREMEN that promotes internalization of LRP5/6. DKKs play an important role in vertebrate development, where they locally inhibit Wnt regulated processes such as antero-posterior axial patterning, limb development, somitogenesis and eye formation. In the adult, Dkks are implicated in bone formation and bone disease, cancer and Alzheimer disease. Inhibits the pro-apoptotic function of KREMEN1 in a Wnt-independent manner, and has anti-apoptotic activity. The polypeptide is Dickkopf-related protein 1 (DKK1) (Homo sapiens (Human)).